Consider the following 288-residue polypeptide: 33 kDa chaperonin (288 aa).

2 disulfides stabilise this stretch: Cys-235–Cys-237 and Cys-268–Cys-271.

Belongs to the HSP33 family. Under oxidizing conditions two disulfide bonds are formed involving the reactive cysteines. Under reducing conditions zinc is bound to the reactive cysteines and the protein is inactive.

The protein resides in the cytoplasm. Its function is as follows. Redox regulated molecular chaperone. Protects both thermally unfolding and oxidatively damaged proteins from irreversible aggregation. Plays an important role in the bacterial defense system toward oxidative stress. This chain is 33 kDa chaperonin, found in Streptococcus suis (strain 98HAH33).